A 178-amino-acid polypeptide reads, in one-letter code: ATP synthase subunit delta (178 aa).

This sequence belongs to the ATPase delta chain family. F-type ATPases have 2 components, F(1) - the catalytic core - and F(0) - the membrane proton channel. F(1) has five subunits: alpha(3), beta(3), gamma(1), delta(1), epsilon(1). F(0) has three main subunits: a(1), b(2) and c(10-14). The alpha and beta chains form an alternating ring which encloses part of the gamma chain. F(1) is attached to F(0) by a central stalk formed by the gamma and epsilon chains, while a peripheral stalk is formed by the delta and b chains.

The protein resides in the cell inner membrane. Functionally, f(1)F(0) ATP synthase produces ATP from ADP in the presence of a proton or sodium gradient. F-type ATPases consist of two structural domains, F(1) containing the extramembraneous catalytic core and F(0) containing the membrane proton channel, linked together by a central stalk and a peripheral stalk. During catalysis, ATP synthesis in the catalytic domain of F(1) is coupled via a rotary mechanism of the central stalk subunits to proton translocation. Its function is as follows. This protein is part of the stalk that links CF(0) to CF(1). It either transmits conformational changes from CF(0) to CF(1) or is implicated in proton conduction. In Aromatoleum aromaticum (strain DSM 19018 / LMG 30748 / EbN1) (Azoarcus sp. (strain EbN1)), this protein is ATP synthase subunit delta.